The primary structure comprises 639 residues: NADP-dependent malic enzyme, chloroplastic (639 aa).

The N-terminal 49 residues, 1–49 (MLSARAAATAAAAAASPLWKRGEGGSSGSGSGCTSCREVRRRAAAVRVR), are a transit peptide targeting the chloroplast. Residues 15 to 34 (ASPLWKRGEGGSSGSGSGCT) form a disordered region. Y187 acts as the Proton donor in catalysis. An NAD(+)-binding site is contributed by R240. Residue K258 is the Proton acceptor of the active site. Positions 330, 331, and 354 each coordinate a divalent metal cation. D354 serves as a coordination point for NAD(+). Residue 383 to 399 (LFLGAGEAGTGIAELIA) coordinates NADP(+). An NAD(+)-binding site is contributed by N495.

The protein belongs to the malic enzymes family. Homotetramer. Requires Mg(2+) as cofactor. Mn(2+) serves as cofactor.

It localises to the plastid. Its subcellular location is the chloroplast. The catalysed reaction is (S)-malate + NADP(+) = pyruvate + CO2 + NADPH. It catalyses the reaction oxaloacetate + H(+) = pyruvate + CO2. The protein operates within photosynthesis; C4 acid pathway. In terms of biological role, the chloroplastic ME isoform decarboxylates malate shuttled from neighboring mesophyll cells. The CO(2) released is then refixed by ribulose-bisphosphate carboxylase. This pathway eliminates the photorespiratory loss of CO(2) that occurs in most plants. This chain is NADP-dependent malic enzyme, chloroplastic (ME6), found in Oryza sativa subsp. japonica (Rice).